The sequence spans 131 residues: Small ribosomal subunit protein eS8 (131 aa).

The segment at 15–36 (PSGGKKGRVRKTKKKALGGGPP) is disordered. Over residues 17-30 (GGKKGRVRKTKKKA) the composition is skewed to basic residues.

It belongs to the eukaryotic ribosomal protein eS8 family. Part of the 30S ribosomal subunit.

This Pyrobaculum calidifontis (strain DSM 21063 / JCM 11548 / VA1) protein is Small ribosomal subunit protein eS8.